The sequence spans 345 residues: Phenylalanine--tRNA ligase alpha subunit (345 aa).

E259 provides a ligand contact to Mg(2+).

Belongs to the class-II aminoacyl-tRNA synthetase family. Phe-tRNA synthetase alpha subunit type 1 subfamily. In terms of assembly, tetramer of two alpha and two beta subunits. The cofactor is Mg(2+).

It localises to the cytoplasm. It carries out the reaction tRNA(Phe) + L-phenylalanine + ATP = L-phenylalanyl-tRNA(Phe) + AMP + diphosphate + H(+). The polypeptide is Phenylalanine--tRNA ligase alpha subunit (Nitrosomonas europaea (strain ATCC 19718 / CIP 103999 / KCTC 2705 / NBRC 14298)).